We begin with the raw amino-acid sequence, 304 residues long: GTPase Era (304 aa).

One can recognise an Era-type G domain in the interval Tyr-11–Glu-179. Residues Gly-19–Ser-26 are G1. GTP is bound at residue Gly-19–Ser-26. The tract at residues Gln-45 to His-49 is G2. Residues Asp-66–Gly-69 form a G3 region. Residues Asp-66–Leu-70 and Asn-128–Asp-131 each bind GTP. The interval Asn-128–Asp-131 is G4. The tract at residues Ile-158–Ala-160 is G5. The KH type-2 domain occupies Thr-210 to Ala-287.

This sequence belongs to the TRAFAC class TrmE-Era-EngA-EngB-Septin-like GTPase superfamily. Era GTPase family. Monomer.

Its subcellular location is the cytoplasm. The protein resides in the cell inner membrane. In terms of biological role, an essential GTPase that binds both GDP and GTP, with rapid nucleotide exchange. Plays a role in 16S rRNA processing and 30S ribosomal subunit biogenesis and possibly also in cell cycle regulation and energy metabolism. This is GTPase Era from Actinobacillus pleuropneumoniae serotype 5b (strain L20).